The sequence spans 179 residues: MAVSRITRWRLMSVIFGIKCLFLMVTLGVLLINSFTIQNIQSTPSPTTTVEFQEVSECCVCLDKWVGHQCNCYFISKEEKSWKRSRDFCASQNSSLLQPQSRNELSFMNFSQTFFWIGMHYSEKRNAWLWEDGTVPSKDLFPEFSVIRPEHCIVYSPSKSVSAESCENKNRYICKKLPI.

At 1–10 the chain is on the cytoplasmic side; that stretch reads MAVSRITRWR. Residues 11–31 form a helical; Signal-anchor for type II membrane protein membrane-spanning segment; it reads LMSVIFGIKCLFLMVTLGVLL. At 32-179 the chain is on the extracellular side; that stretch reads INSFTIQNIQ…NRYICKKLPI (148 aa). 4 disulfide bridges follow: Cys58–Cys70, Cys61–Cys72, Cys89–Cys174, and Cys152–Cys166. A C-type lectin domain is found at 68–175; that stretch reads HQCNCYFISK…CENKNRYICK (108 aa). N-linked (GlcNAc...) asparagine glycans are attached at residues Asn93 and Asn109.

In terms of assembly, can form disulfide-bonded heterodimer with NKG2 family members KLRC1 and KLRC2. KLRD1-KLRC1 heterodimer interacts with peptide-bound MHC-E-B2M heterotrimeric complex. KLRD1 plays a prominent role in directly interacting with MHC-E. KLRD1-KLRC1 interacts with much higher affinity with peptide-bound MHC-E-B2M than KLRD1-KLRC2. Interacts with the adapter protein TYROBP/DAP12; this interaction is required for cell surface expression and cell activation.

It localises to the cell membrane. Its function is as follows. Immune receptor involved in self-nonself discrimination. In complex with KLRC1 or KLRC2 on cytotoxic and regulatory lymphocyte subsets, recognizes non-classical major histocompatibility (MHC) class Ib molecule MHC-E loaded with self-peptides derived from the signal sequence of classical MHC class Ia and non-classical MHC class Ib molecules. Enables cytotoxic cells to monitor the expression of MHC class I molecules in healthy cells and to tolerate self. Primarily functions as a ligand binding subunit as it lacks the capacity to signal. Functionally, KLRD1-KLRC1 acts as an immune inhibitory receptor. Key inhibitory receptor on natural killer (NK) cells that regulates their activation and effector functions. Dominantly counteracts T cell receptor signaling on a subset of memory/effector CD8-positive T cells as part of an antigen-driven response to avoid autoimmunity. On intraepithelial CD8-positive gamma-delta regulatory T cells triggers TGFB1 secretion, which in turn limits the cytotoxic programming of intraepithelial CD8-positive alpha-beta T cells, distinguishing harmless from pathogenic antigens. In MHC-E-rich tumor microenvironment, acts as an immune inhibitory checkpoint and may contribute to progressive loss of effector functions of NK cells and tumor-specific T cells, a state known as cell exhaustion. Upon MHC-E-peptide binding, transmits intracellular signals through KLRC1 immunoreceptor tyrosine-based inhibition motifs (ITIMs) by recruiting INPP5D/SHIP-1 and INPPL1/SHIP-2 tyrosine phosphatases to ITIMs, and ultimately opposing signals transmitted by activating receptors through dephosphorylation of proximal signaling molecules. KLRD1-KLRC2 acts as an immune activating receptor. On cytotoxic lymphocyte subsets recognizes MHC-E loaded with signal sequence-derived peptides from non-classical MHC class Ib MHC-G molecules, likely playing a role in the generation and effector functions of adaptive NK cells and in maternal-fetal tolerance during pregnancy. Regulates the effector functions of terminally differentiated cytotoxic lymphocyte subsets, and in particular may play a role in adaptive NK cell response to viral infection. Upon MHC-E-peptide binding, transmits intracellular signals via the adapter protein TYROBP/DAP12, triggering the phosphorylation of proximal signaling molecules and cell activation. The sequence is that of Natural killer cells antigen CD94 (Klrd1) from Mus musculus (Mouse).